Consider the following 1360-residue polypeptide: KN motif and ankyrin repeat domains 1 (1360 aa).

Positions 30–68 are KN motif; Interaction with TLN1; that stretch reads PYFVETPYGFQLDLDFVKYVDDIQKGNTIKKLNIQKRRK. The Important for binding to TLN1 motif lies at 41-44; that stretch reads LDLD. The short motif at 43–52 is the Nuclear export signal 1 (NES 1) element; that stretch reads LDFVKYVDDI. The Nuclear localization signal 1 (NLS 1) motif lies at 65–68; sequence KRRK. A disordered region spans residues 66 to 103; sequence RRKPSVPCPEVRAIPGHQGVWTSTESLSSSNSDDSKQC. Positions 88–103 are enriched in low complexity; that stretch reads STESLSSSNSDDSKQC. The Nuclear export signal 2 (NES 2) motif lies at 125–134; the sequence is LETSPTFAVS. S186 bears the Phosphoserine mark. The segment at 221–253 is disordered; it reads DYNSYVPAAPTTSSMGSSVRHSPLSSGISTPVT. Positions 230–253 are enriched in polar residues; sequence PTTSSMGSSVRHSPLSSGISTPVT. The interval 244–339 is interaction with PPFIBP1; the sequence is LSSGISTPVT…SQLELLARAR (96 aa). Positions 260 to 311 form a coiled coil; it reads LQHIREQMAIALKRLKELEEQVRTIPVLQVKISVLQEEKRQLASQLKSQRAS. A Phosphoserine modification is found at S325. Coiled-coil stretches lie at residues 367–394 and 453–487; these read FRQL…ELRE and ITEA…TTHD. The Nuclear export signal 3 (NES 3) motif lies at 618-627; sequence LTLLKTNLNL. Disordered regions lie at residues 929–954 and 983–1053; these read SQPE…MQGS and IMKK…DTRG. Composition is skewed to basic and acidic residues over residues 938–947 and 985–995; these read AEGKHSRGHE and KKSDGNKDSNG. Residues 985-998 carry the Nuclear localization signal 2 (NLS 2) motif; sequence KKSDGNKDSNGAKK. Residues 1010–1025 are compositionally biased toward low complexity; that stretch reads ETTSSDESSSDGSSSS. Acidic residues predominate over residues 1026-1047; it reads ESDDECDTIGYPPEEEEEEEEK. Residues 1081–1360 form an interaction with KIF21A region; that stretch reads EPEKEEIRER…PGPTHRGSFD (280 aa). One copy of the ANK 0; degenerate repeat lies at 1117–1154; sequence KDMRICLNTLQHDWFRVSSQKSAVPAMVGDYIAAFEAV. ANK repeat units lie at residues 1169 to 1199, 1203 to 1236, 1241 to 1270, 1274 to 1306, and 1308 to 1337; these read NGNT…NVDH, AGYT…DVNA, AGQT…DVNI, EGST…HLED, and DGST…FSKA. The segment at 1337–1360 is disordered; it reads AQSPSTPRLGRKTSPGPTHRGSFD.

In terms of assembly, part of a cortical microtubule stabilization complex (CMSC) composed of KANK1, PPFIA1, PPFIBP1, ERC1/ELKS, PHLDB2/LL5beta, CLASPs, KIF21A and possibly additional interactors; within CMSCs KANK1 and PHLDB2/LL5beta appear to be the core components for targeting of microtubule-binding proteins KIF21A and CLASPs, whereas PPFIA1, PPFIBP1 and ERC1/ELKS serve as scaffolds for protein clustering. Interacts (via KN motif) with TLN1 (via R7 domain); this mediates CMSC clustering around focal adhesions. Interacts (via CC1 domain, residues 244-339) with PPFIBP1. Interacts (via ANK repeats 1-5) with KIF21A (via residues 1142-1169). Interacts with YWHAQ; the interaction requires KANK1 phosphorylation at Ser-325 and is enhanced by growth factor stimulation. Interacts with YWHAB, YWHAG, YWHAE, YWHAH, YWHAZ and SFN; the interaction requires KANK1 phosphorylation at Ser-325. Interacts with ARFGEF1; however, colocalization cannot be experimentally confirmed. Interacts with BAIAP2. Interacts with CTNNB1. Interacts (via coiled coil domain) with DAAM1 (via coiled coil domain).

Its subcellular location is the cytoplasm. It localises to the cell cortex. The protein resides in the cell projection. It is found in the ruffle membrane. The protein localises to the nucleus. Adapter protein that links structural and signaling protein complexes positioned to guide microtubule and actin cytoskeleton dynamics during cell morphogenesis. At focal adhesions (FAs) rims, organizes cortical microtubule stabilizing complexes (CMSCs) and directly interacts with major FA component TLN1, forming macromolecular assemblies positioned to control microtubule-actin crosstalk at the cell edge. Recruits KIF21A in CMSCs at axonal growth cones and regulates axon guidance by suppressing microtubule growth without inducing microtubule disassembly once it reaches the cell cortex. Interacts with ARFGEF1 and participates in establishing microtubule-organizing center (MTOC) orientation and directed cell movement in wound healing. Regulates actin stress fiber formation and cell migration by inhibiting RHOA activation in response to growth factors; this function involves phosphorylation through PI3K/Akt signaling and may depend on the competitive interaction with 14-3-3 adapter proteins to sequester them from active complexes. Inhibits the formation of lamellipodia but not of filopodia; this function may depend on the competitive interaction with BAIAP2 to block its association with activated RAC1. Inhibits fibronectin-mediated cell spreading; this function is partially mediated by BAIAP2. In the nucleus, is involved in beta-catenin-dependent activation of transcription. During cell division, may regulate DAAM1-dependent RHOA activation that signals centrosome maturation and chromosomal segregation. May also be involved in contractile ring formation during cytokinesis. Potential tumor suppressor for renal cell carcinoma. In Mus musculus (Mouse), this protein is KN motif and ankyrin repeat domains 1.